The chain runs to 451 residues: KNR4/SMI1 homolog 1 (451 aa).

The span at 410–422 (ENQIAGGSDNAKN) shows a compositional bias: polar residues. The disordered stretch occupies residues 410–451 (ENQIAGGSDNAKNQVKLGETSDTKQDDTSKIASTVSTSDEDE). A compositionally biased stretch (basic and acidic residues) spans 428-438 (ETSDTKQDDTS). Polar residues predominate over residues 439–451 (KIASTVSTSDEDE).

Belongs to the KNR4/SMI1 family.

The protein is KNR4/SMI1 homolog 1 of Debaryomyces hansenii (strain ATCC 36239 / CBS 767 / BCRC 21394 / JCM 1990 / NBRC 0083 / IGC 2968) (Yeast).